The primary structure comprises 83 residues: Cytochrome b559 subunit alpha (83 aa).

A helical transmembrane segment spans residues 21–35 (VIHSITIPSLFIAGW). Heme is bound at residue histidine 23.

This sequence belongs to the PsbE/PsbF family. Heterodimer of an alpha subunit and a beta subunit. PSII is composed of 1 copy each of membrane proteins PsbA, PsbB, PsbC, PsbD, PsbE, PsbF, PsbH, PsbI, PsbJ, PsbK, PsbL, PsbM, PsbT, PsbX, PsbY, PsbZ, Psb30/Ycf12, at least 3 peripheral proteins of the oxygen-evolving complex and a large number of cofactors. It forms dimeric complexes. The cofactor is heme b.

The protein resides in the plastid. The protein localises to the chloroplast thylakoid membrane. Its function is as follows. This b-type cytochrome is tightly associated with the reaction center of photosystem II (PSII). PSII is a light-driven water:plastoquinone oxidoreductase that uses light energy to abstract electrons from H(2)O, generating O(2) and a proton gradient subsequently used for ATP formation. It consists of a core antenna complex that captures photons, and an electron transfer chain that converts photonic excitation into a charge separation. This chain is Cytochrome b559 subunit alpha, found in Psilotum nudum (Whisk fern).